Here is a 160-residue protein sequence, read N- to C-terminus: SPbeta prophage-derived uncharacterized protein YokE (160 aa).

This is SPbeta prophage-derived uncharacterized protein YokE (yokE) from Bacillus subtilis (strain 168).